We begin with the raw amino-acid sequence, 463 residues long: Ribosomal protein uS12 methylthiotransferase RimO (463 aa).

The interval 1–26 is disordered; sequence MPAMSQNPPLLRPDLAPAPIFDTSRR. The span at 8–19 shows a compositional bias: low complexity; that stretch reads PPLLRPDLAPAP. Positions 30 to 140 constitute an MTTase N-terminal domain; that stretch reads PTIGMVSLGC…VLDAVHHAVP (111 aa). 6 residues coordinate [4Fe-4S] cluster: cysteine 39, cysteine 75, cysteine 104, cysteine 171, cysteine 175, and cysteine 178. Residues 157-395 form the Radical SAM core domain; the sequence is LTPRHYSYLK…MQKAQAISEA (239 aa). In terms of domain architecture, TRAM spans 398–463; the sequence is AAKVGHRIEV…AGEYDLWGRL (66 aa).

It belongs to the methylthiotransferase family. RimO subfamily. The cofactor is [4Fe-4S] cluster.

The protein localises to the cytoplasm. The enzyme catalyses L-aspartate(89)-[ribosomal protein uS12]-hydrogen + (sulfur carrier)-SH + AH2 + 2 S-adenosyl-L-methionine = 3-methylsulfanyl-L-aspartate(89)-[ribosomal protein uS12]-hydrogen + (sulfur carrier)-H + 5'-deoxyadenosine + L-methionine + A + S-adenosyl-L-homocysteine + 2 H(+). In terms of biological role, catalyzes the methylthiolation of an aspartic acid residue of ribosomal protein uS12. This is Ribosomal protein uS12 methylthiotransferase RimO from Paracoccus denitrificans (strain Pd 1222).